A 580-amino-acid chain; its full sequence is MALQLLTPSFSFQHSPSPHRLTTLRYTHHTIRCTASAPSYSDLVGRRSANYKPSKWDSNFVETLESDYKKENHEMYIEKLMGDVKHLMKKVVNPIEKMELVDTIQRLGLGYLFNKEIKEVLNTIATSKATFKTKKDLHAVALQFRLLRQHGYEVSPDAFHKFKDEKGGFKESLCMDIKGMLSLYEASHLSFQGEVVLDEAREFTSTHLKAIEGNIDPVLLKKVRHSLEMPLHWRMLRLEARWYIETYDEEDRKNPSLAELAKHDFNSVQTIYQRSLKRMSRWWRDLGLGERLEFSRDRLVECFFWTTGVIFDPQFERCRGVLTKVNQLVSTIDDVYDVYGSLEELELFTDAVDRWDIRAMEQLPEYMKICYLALYNTTNDIAYEALKEEGLDVIPYLKKVWTDLCKSYIVEARWYSNGYKPTLEEYLENAWTSIAGPVALGHAYFSFGQKMPFEALNYSNTSSLIKWSSMIFRLCDDLATSSDEVARGDVPKSIQCYMYEAGVSESVARDHIKYLIDEAWKKMNECLVPSTPFLQPLINAGFNLARMAHCMYEHGDGHGFSNELDKKRVLLLLAEPFKFM.

Residues Met1 to Tyr26 constitute a chloroplast transit peptide. (2E)-geranyl diphosphate is bound by residues Arg296, Asp333, Asp337, Arg473, and Asp476. 2 residues coordinate Mg(2+): Asp333 and Asp337. Positions Asp333 to Asp337 match the DDXXD motif motif. Positions 476, 480, and 484 each coordinate Mg(2+).

The protein belongs to the terpene synthase family. Tpsb subfamily. In terms of assembly, monomer. Mg(2+) serves as cofactor. The cofactor is Mn(2+). In terms of tissue distribution, mostly expressed in developing and mature fruits, and, to a lower extent, in male leaves. Barely detectable in female leaves and shoots.

It is found in the plastid. The protein localises to the chloroplast. The catalysed reaction is (2E)-geranyl diphosphate = alpha-thujene + diphosphate. It catalyses the reaction (2E)-geranyl diphosphate = (1R,5R)-sabinene + diphosphate. It functions in the pathway secondary metabolite biosynthesis; terpenoid biosynthesis. In terms of biological role, monoterpene synthase (TPS) involved in the biosynthesis of monoterpene natural products used by traditional Chinese medicine to treat headache, inflammation and intoxication. Catalyzes the conversion of (2E)-geranyl diphosphate (GPP) into alpha-thujene and (1R,5R)-sabinene. The chain is Alpha-thujene synthase TPS3, chloroplastic from Litsea cubeba (Aromatic litsea).